Reading from the N-terminus, the 675-residue chain is Probable potassium transport system protein Kup (675 aa).

Positions 1-12 (MEPAMPEHDGDH) are enriched in basic and acidic residues. Residues 1 to 25 (MEPAMPEHDGDHASNPPHGVGIPND) form a disordered region. The next 12 helical transmembrane spans lie at 62–82 (ALLAVLGVVYGDIGTSPLYAL), 104–124 (LASLTFWALMLIVTIKYVILI), 153–173 (WLFGLVGIAGTCLFFGDSIIT), 195–215 (IIIPLAMVVLVALFSVQVLGT), 222–242 (FGPIMVCWFSVLAILGIKGIF), 255–275 (FALEFIVLHGYLSFIALGSVV), 300–320 (WLFFVLPSLTLNYFGQAALLI), 332–352 (LLVPHWAQIPMLVLATFATVI), 390–410 (IYLPSLNWILAFGALVLVLAF), 419–439 (AYGIAVTGTFLCTCVLAMVVF), 450–470 (VAIVFGFFFIVDSIFFSANVL), and 472–492 (IPDGGWVPLAIGIISTIIMTT).

This sequence belongs to the HAK/KUP transporter (TC 2.A.72) family.

It localises to the cell inner membrane. It carries out the reaction K(+)(in) + H(+)(in) = K(+)(out) + H(+)(out). Transport of potassium into the cell. Likely operates as a K(+):H(+) symporter. In Gluconobacter oxydans (strain 621H) (Gluconobacter suboxydans), this protein is Probable potassium transport system protein Kup.